A 306-amino-acid polypeptide reads, in one-letter code: D-alanine--D-alanine ligase (306 aa).

Active-site residues include Glu15 and Ser150. Positions 101 to 303 (KLLWKSLSLR…FDELILKILK (203 aa)) constitute an ATP-grasp domain. 134–189 (ILKLKFPVVIKPNNAGSSIGITIVNHPDLLIDSINLAFNYSNNIIIEKFLKGTEYT) contacts ATP. Asp257, Glu270, and Asn272 together coordinate Mg(2+). Ser281 is an active-site residue.

This sequence belongs to the D-alanine--D-alanine ligase family. Mg(2+) is required as a cofactor. Requires Mn(2+) as cofactor.

It is found in the cytoplasm. The enzyme catalyses 2 D-alanine + ATP = D-alanyl-D-alanine + ADP + phosphate + H(+). Its pathway is cell wall biogenesis; peptidoglycan biosynthesis. In terms of biological role, cell wall formation. The protein is D-alanine--D-alanine ligase of Buchnera aphidicola subsp. Schizaphis graminum (strain Sg).